We begin with the raw amino-acid sequence, 408 residues long: UPF0761 membrane protein azo3165 (408 aa).

Helical transmembrane passes span 29–49, 92–112, 131–151, 172–192, 197–217, 220–240, and 241–261; these read LAFT…GVFG, LTLI…ATIE, ITVS…SVVA, IAAA…LYYA, PVRL…FLLM, GLGL…TFAA, and LPIF…GALI.

This sequence belongs to the UPF0761 family.

The protein localises to the cell inner membrane. This is UPF0761 membrane protein azo3165 from Azoarcus sp. (strain BH72).